The sequence spans 170 residues: Disulfide bond formation protein B 1 (170 aa).

Residues 1-14 lie on the Cytoplasmic side of the membrane; it reads MNDYTLAIRRERRL. Residues 15–31 form a helical membrane-spanning segment; that stretch reads LMLLGWVCIALLAGALY. Residues 32-49 are Periplasmic-facing; sequence LQYVKNEDPCPLCIIQRY. A disulfide bridge links C41 with C44. A helical membrane pass occupies residues 50-64; the sequence is FFCAIGIFAFLAAGI. At 65-71 the chain is on the cytoplasmic side; that stretch reads RNWRGVW. Residues 72 to 89 form a helical membrane-spanning segment; it reads VLELLIAIAAAGGVGTAA. Residues 90–144 are Periplasmic-facing; it reads RHLTIQMNPGFSCGFDTLQPIVDSLPPAQWFPGMFKVAGLCETVYPPIFGILLPG. A disulfide bridge links C102 with C130. A helical transmembrane segment spans residues 145-163; the sequence is WSLIGFAVILIAVVASLWR. Residues 164 to 170 lie on the Cytoplasmic side of the membrane; sequence HRRKLVG.

The protein belongs to the DsbB family.

The protein localises to the cell inner membrane. In terms of biological role, required for disulfide bond formation in some periplasmic proteins. Acts by oxidizing the DsbA protein. This is Disulfide bond formation protein B 1 from Burkholderia lata (strain ATCC 17760 / DSM 23089 / LMG 22485 / NCIMB 9086 / R18194 / 383).